Consider the following 411-residue polypeptide: Tyrosine--tRNA ligase (411 aa).

Tyr34 contacts L-tyrosine. Positions 39–48 match the 'HIGH' region motif; that stretch reads CTATSLHIGS. 2 residues coordinate L-tyrosine: Tyr171 and Gln175. A 'KMSKS' region motif is present at residues 231 to 235; the sequence is KMGKT. Lys234 serves as a coordination point for ATP. The region spanning 345–411 is the S4 RNA-binding domain; the sequence is ISAYELFHEA…GKKKHILVRV (67 aa).

Belongs to the class-I aminoacyl-tRNA synthetase family. TyrS type 1 subfamily. In terms of assembly, homodimer.

It localises to the cytoplasm. The enzyme catalyses tRNA(Tyr) + L-tyrosine + ATP = L-tyrosyl-tRNA(Tyr) + AMP + diphosphate + H(+). Catalyzes the attachment of tyrosine to tRNA(Tyr) in a two-step reaction: tyrosine is first activated by ATP to form Tyr-AMP and then transferred to the acceptor end of tRNA(Tyr). The sequence is that of Tyrosine--tRNA ligase from Rickettsia conorii (strain ATCC VR-613 / Malish 7).